The sequence spans 375 residues: Ribosomal RNA large subunit methyltransferase F (375 aa).

2 disordered regions span residues 1 to 39 (MKNN…AAVK) and 262 to 281 (NQRK…GKPT). The span at 27–38 (AKPKRVKKKAAV) shows a compositional bias: basic residues.

The protein belongs to the methyltransferase superfamily. METTL16/RlmF family.

Its subcellular location is the cytoplasm. It carries out the reaction adenosine(1618) in 23S rRNA + S-adenosyl-L-methionine = N(6)-methyladenosine(1618) in 23S rRNA + S-adenosyl-L-homocysteine + H(+). Functionally, specifically methylates the adenine in position 1618 of 23S rRNA. This is Ribosomal RNA large subunit methyltransferase F from Vibrio parahaemolyticus serotype O3:K6 (strain RIMD 2210633).